A 383-amino-acid polypeptide reads, in one-letter code: tRNA (guanine-N(7)-)-methyltransferase non-catalytic subunit wuho (383 aa).

WD repeat units lie at residues 61 to 101 (NLEV…ALLL), 105 to 144 (ALAR…APPK), 148 to 187 (GHLS…DIHS), 191 to 231 (GHKE…EVLQ), and 289 to 329 (AGSW…QAES).

The protein belongs to the WD repeat TRM82 family. In terms of assembly, forms a heterodimer with the catalytic subunit Mettl1. Interacts with mei-P26 and weakly interacts with bgcn; required for the function or formation of the mei-P26-bgcn-bam-sxl complex. Interacts with nanos; may be involved in mei-P26-dependent derepression of the BMP signaling pathway. Interacts with Myc; the interaction may be mediated by mei-P26 and may be involved in the regulation of ribosome biogenesis. In testis, it is present at high level in hub cells, a niche for germline stem cells of testis. Ubiquitously expressed in all testicular cells throughout spermatogenesis. Ubiquitously expressed in all germline and somatic cells of the ovary.

It localises to the nucleus. Its subcellular location is the cytoplasm. It participates in tRNA modification; N(7)-methylguanine-tRNA biosynthesis. In terms of biological role, required for the Mettl1-dependent formation of N(7)-methylguanine at position 46 (m7G46) in tRNA. In the Mettl1-wuho methyltransferase complex, it is required to stabilize and induce conformational changes of the catalytic subunit. Required for binding of nanos mRNA and repression of translation by the mei-P26-bgcn-bam-sxl complex. May cooperate with mei-P26 and nanos to derepress the BMP signaling pathway. May cooperate with mei-P26 to suppress expression of a subset of microRNAs. May cooperate with mei-P26 to regulate bam expression levels in germline cells during gametogenesis. Required to promote mitosis to meiosis transition during gametogenesis. May regulate germline cell division in part by regulating ribosome biogenesis. The protein is tRNA (guanine-N(7)-)-methyltransferase non-catalytic subunit wuho of Drosophila mojavensis (Fruit fly).